Here is a 471-residue protein sequence, read N- to C-terminus: Pancreatic lipase-related protein 2 (471 aa).

The first 17 residues, 1-17 (MLPSWTIGLLLLATVRG), serve as a signal peptide directing secretion. A disulfide bridge connects residues Cys-21 and Cys-27. Asn-71 is a glycosylation site (N-linked (GlcNAc...) asparagine). Residues 93–105 (IHGFIDKGEDSWP) form a required for galactolipase activity region. Cysteines 109 and 120 form a disulfide. Ser-171 acts as the Nucleophile in catalysis. The active-site Charge relay system is the Asp-195. Ca(2+) is bound by residues Glu-206, Arg-209, Asp-211, and Asp-214. A disulfide bridge links Cys-256 with Cys-280. The tract at residues 257–279 (QKNTLSTIVDVDGIWEGIEDFAA) is required for galactolipase activity. The Charge relay system role is filled by His-282. 2 disulfides stabilise this stretch: Cys-304–Cys-317 and Cys-320–Cys-325. Residue Asn-355 is glycosylated (N-linked (GlcNAc...) asparagine). Residues 359–471 (WRYRVSVTLA…ENILQTLNPC (113 aa)) form the PLAT domain. Cys-455 and Cys-471 are oxidised to a cystine.

It belongs to the AB hydrolase superfamily. Lipase family.

It is found in the secreted. Its subcellular location is the zymogen granule membrane. The protein resides in the cell projection. The protein localises to the neuron projection. The catalysed reaction is a triacylglycerol + H2O = a diacylglycerol + a fatty acid + H(+). It carries out the reaction a 1,2-diacyl-3-O-(beta-D-galactosyl)-sn-glycerol + 2 H2O = 3-beta-D-galactosyl-sn-glycerol + 2 a fatty acid + 2 H(+). It catalyses the reaction 1,2,3-tri-(9Z-octadecenoyl)-glycerol + H2O = di-(9Z)-octadecenoylglycerol + (9Z)-octadecenoate + H(+). The enzyme catalyses di-(9Z)-octadecenoylglycerol + H2O = (9Z-octadecenoyl)-glycerol + (9Z)-octadecenoate + H(+). The catalysed reaction is (9Z-octadecenoyl)-glycerol + H2O = glycerol + (9Z)-octadecenoate + H(+). It carries out the reaction 1-(9Z-octadecenoyl)-glycerol + H2O = glycerol + (9Z)-octadecenoate + H(+). It catalyses the reaction 1,2,3-tripropanoylglycerol + H2O = dipropanoylglycerol + propanoate + H(+). The enzyme catalyses 1,2,3-tributanoylglycerol + H2O = dibutanoylglycerol + butanoate + H(+). The catalysed reaction is 1,2,3-trioctanoylglycerol + H2O = dioctanoylglycerol + octanoate + H(+). It carries out the reaction 1,2-didecanoylglycerol + H2O = decanoylglycerol + decanoate + H(+). It catalyses the reaction long chain 1,2-diacyl-3-O-beta-D-galactosyl-sn-glycerol + H2O = long chain acyl-3-O-beta-D-galactosyl-sn-glycerol + a fatty acid + H(+). The enzyme catalyses 1,2-dioctanoyl-3-O-beta-D-galactosyl-sn-glycerol + H2O = octanoyl-3-(beta-D-galactosyl)-sn-glycerol + octanoate + H(+). The catalysed reaction is 1,2-didodecanoyl-3-beta-D-galactosyl-sn-glycerol + H2O = dodecanoyl-3-beta-D-galactosyl-sn-glycerol + dodecanoate + H(+). It carries out the reaction 1-beta-D-galactosyl-2,3-didodecanoyl-sn-glycerol + H2O = 1-beta-D-galactosyl-dodecanoyl-sn-glycerol + dodecanoate + H(+). It catalyses the reaction a 1,2-diacyl-3-O-[alpha-D-galactosyl-(1-&gt;6)-beta-D-galactosyl]-sn-glycerol + H2O = acyl-3-O-[alpha-D-galactosyl-(1-&gt;6)-beta-D-galactosyl]-sn-glycerol + a fatty acid + H(+). The enzyme catalyses long chain 1,2-diacyl-3-O-[alpha-D-galactosyl-(1-&gt;6)-beta-D-galactosyl]-sn-glycerol + H2O = long chain acyl-3-O-[alpha-D-galactosyl-(1-&gt;6)-beta-D-galactosyl]-sn-glycerol + a fatty acid + H(+). The catalysed reaction is 1,2-dioctanoyl-3-O-[alpha-D-galactosyl-(1-&gt;6)-beta-D-galactosyl]-sn-glycerol + H2O = octanoyl-3-O-[alpha-D-galactosyl-(1-&gt;6)-beta-D-galactosyl]-sn-glycerol + octanoate + H(+). It carries out the reaction 1,2-didodecanoyl-3-O-[alpha-D-galactosyl-(1-&gt;6)-beta-D-galactosyl]-sn-glycerol + H2O = dodecanoyl-3-O-[alpha-D-galactosyl-(1-&gt;6)-beta-D-galactosyl]-sn-glycerol + dodecanoate + H(+). It catalyses the reaction a 1,2-diacyl-sn-glycero-3-phosphocholine + H2O = a monoacyl-sn-glycero-3-phosphocholine + a fatty acid + H(+). It participates in glycerolipid metabolism; triacylglycerol degradation. It functions in the pathway glycolipid metabolism. Its activity is regulated as follows. Up-regulated by CLPS in the presence of increasing concentrations of bile salts. Lipase that primarily hydrolyzes triglycerides and galactosylglycerides. In neonates, may play a major role in pancreatic digestion of dietary fats such as milk fat globules enriched in long-chain triglycerides. Hydrolyzes short-, medium- and long-chain fatty acyls in triglycerides without apparent positional specificity. Can completely deacylate triacylglycerols. When the liver matures and bile salt synthesis increases, likely functions mainly as a galactolipase and monoacylglycerol lipase. Hydrolyzes monogalactosyldiglycerols (MGDG) and digalactosyldiacylglycerols (DGDG) present in a plant-based diet, releasing long-chain polyunsaturated fatty acids. Hydrolyzes medium- and long-chain fatty acyls in galactolipids. May act together with LIPF to hydrolyze partially digested triglycerides. Hydrolyzes long-chain monoglycerides with high efficiency. In cytotoxic T cells, contributes to perforin-dependent cell lysis, but is unlikely to mediate direct cytotoxicity. Also has low phospholipase activity. In neurons, required for the localization of the phospholipid 1-oleoyl-2-palmitoyl-PC (OPPC) to neurite tips through acyl chain remodeling of membrane phospholipids. The resulting OPPC-rich lipid membrane domain recruits the t-SNARE protein STX4 by selectively interacting with the STX4 transmembrane domain and this promotes surface expression of the dopamine transporter SLC6A3/DAT at neurite tips by facilitating fusion of SLC6A3-containing transport vesicles with the plasma membrane. The chain is Pancreatic lipase-related protein 2 (PNLIPRP2) from Sus scrofa (Pig).